Consider the following 72-residue polypeptide: Translation initiation factor IF-1 (72 aa).

An S1-like domain is found at 2–72; it reads AKEDCIEMQG…SKGRIIFRSR (71 aa).

The protein belongs to the IF-1 family. As to quaternary structure, component of the 30S ribosomal translation pre-initiation complex which assembles on the 30S ribosome in the order IF-2 and IF-3, IF-1 and N-formylmethionyl-tRNA(fMet); mRNA recruitment can occur at any time during PIC assembly.

The protein localises to the cytoplasm. Its function is as follows. One of the essential components for the initiation of protein synthesis. Stabilizes the binding of IF-2 and IF-3 on the 30S subunit to which N-formylmethionyl-tRNA(fMet) subsequently binds. Helps modulate mRNA selection, yielding the 30S pre-initiation complex (PIC). Upon addition of the 50S ribosomal subunit IF-1, IF-2 and IF-3 are released leaving the mature 70S translation initiation complex. In Haemophilus influenzae (strain ATCC 51907 / DSM 11121 / KW20 / Rd), this protein is Translation initiation factor IF-1.